A 428-amino-acid polypeptide reads, in one-letter code: Adenylosuccinate synthetase (428 aa).

GTP-binding positions include 12-18 and 40-42; these read GDEGKGK and GHT. Aspartate 13 (proton acceptor) is an active-site residue. Mg(2+) contacts are provided by aspartate 13 and glycine 40. IMP is bound by residues 13-16, 38-41, threonine 128, arginine 142, glutamine 223, threonine 238, and arginine 302; these read DEGK and NAGH. Residue histidine 41 is the Proton donor of the active site. 298-304 provides a ligand contact to substrate; it reads TTTGRPR. Residues arginine 304, 330-332, and 412-414 each bind GTP; these read KLD and SVG.

It belongs to the adenylosuccinate synthetase family. Homodimer. It depends on Mg(2+) as a cofactor.

It is found in the cytoplasm. It carries out the reaction IMP + L-aspartate + GTP = N(6)-(1,2-dicarboxyethyl)-AMP + GDP + phosphate + 2 H(+). The protein operates within purine metabolism; AMP biosynthesis via de novo pathway; AMP from IMP: step 1/2. In terms of biological role, plays an important role in the de novo pathway of purine nucleotide biosynthesis. Catalyzes the first committed step in the biosynthesis of AMP from IMP. In Desulforamulus reducens (strain ATCC BAA-1160 / DSM 100696 / MI-1) (Desulfotomaculum reducens), this protein is Adenylosuccinate synthetase.